The sequence spans 430 residues: Adenylosuccinate synthetase (430 aa).

Residues 12–18 and 40–42 contribute to the GTP site; these read GDEGKGK and GHT. D13 acts as the Proton acceptor in catalysis. Mg(2+) is bound by residues D13 and G40. Residues 13-16, 38-41, T128, R142, Q223, T238, and R302 contribute to the IMP site; these read DEGK and NAGH. H41 functions as the Proton donor in the catalytic mechanism. Residue 298 to 304 coordinates substrate; it reads TTTGRPR. GTP contacts are provided by residues R304, 330 to 332, and 412 to 414; these read SID and SVG.

Belongs to the adenylosuccinate synthetase family. Homodimer. It depends on Mg(2+) as a cofactor.

It is found in the cytoplasm. It catalyses the reaction IMP + L-aspartate + GTP = N(6)-(1,2-dicarboxyethyl)-AMP + GDP + phosphate + 2 H(+). It functions in the pathway purine metabolism; AMP biosynthesis via de novo pathway; AMP from IMP: step 1/2. Functionally, plays an important role in the de novo pathway of purine nucleotide biosynthesis. Catalyzes the first committed step in the biosynthesis of AMP from IMP. In Streptococcus agalactiae serotype Ia (strain ATCC 27591 / A909 / CDC SS700), this protein is Adenylosuccinate synthetase.